The primary structure comprises 1257 residues: ATP-binding cassette sub-family B member 5 (1257 aa).

Residues 1-24 (MENSERAEEMQENYQRNGTAEEQP) are disordered. The N-linked (GlcNAc...) asparagine glycan is linked to Asn-17. Residues 49-69 (ILGILASLVNGACLPLMPLVL) traverse the membrane as a helical segment. Residues 49–350 (ILGILASLVN…AAVPHFETFA (302 aa)) form the ABC transmembrane type-1 1 domain. 2 N-linked (GlcNAc...) asparagine glycosylation sites follow: Asn-85 and Asn-91. 5 helical membrane-spanning segments follow: residues 110 to 130 (YVGI…LWII), 181 to 201 (KIAL…VGLV), 203 to 223 (GWKL…SAAA), 294 to 314 (VYFF…SLIL), and 322 to 342 (IGTV…IGAA). N-linked (GlcNAc...) asparagine glycans are attached at residues Asn-371, Asn-390, and Asn-423. One can recognise an ABC transporter 1 domain in the interval 386–622 (VEFKNVSFNY…RGLYYSLVMS (237 aa)). ATP is bound at residue 421–428 (GLNGSGKS). The next 2 helical transmembrane spans lie at 693-713 (VLGT…SIIF) and 737-757 (MIFV…GLFY). One can recognise an ABC transmembrane type-1 2 domain in the interval 693 to 980 (VLGTLASVLN…TLVLAPEYSK (288 aa)). N-linked (GlcNAc...) asparagine glycans are attached at residues Asn-789 and Asn-819. Residues 827-847 (VIISFIYGWEMTFLILSIAPV) traverse the membrane as a helical segment. Residue Asn-910 is glycosylated (N-linked (GlcNAc...) asparagine). 2 helical membrane-spanning segments follow: residues 917 to 937 (IIGS…AAGF) and 954 to 974 (MFIV…TLVL). The region spanning 1015-1253 (LEFREVSFFY…RDIYFKLVNA (239 aa)) is the ABC transporter 2 domain. Residue 1050–1057 (GSSGCGKS) participates in ATP binding. 2 N-linked (GlcNAc...) asparagine glycosylation sites follow: Asn-1104 and Asn-1188.

Belongs to the ABC transporter superfamily. ABCB family. Multidrug resistance exporter (TC 3.A.1.201) subfamily. In terms of tissue distribution, expressed by CD133-expressing progenitor cells among epidermal melanocytes (at protein level). Widely expressed with specific expression in pigment cells. Highly expressed in several malignant tissues: highly expressed in clinical melanomas, with low expression in normal skin. In melanoma, marks malignant melanoma-initiating cells (MMIC), in which clinical virulence resides as a consequence of unlimited self-renewal capacity, resulting in inexorable tumor progression and metastasis. Also highly expressed in a number of leukemia cells. Expressed in basal limbal epithelium.

The protein resides in the cell membrane. The catalysed reaction is daunorubicin(in) + ATP + H2O = daunorubicin(out) + ADP + phosphate + H(+). In terms of biological role, energy-dependent efflux transporter responsible for decreased drug accumulation in multidrug-resistant cells. Specifically present in limbal stem cells, where it plays a key role in corneal development and repair. The sequence is that of ATP-binding cassette sub-family B member 5 from Homo sapiens (Human).